Here is a 237-residue protein sequence, read N- to C-terminus: Carboxy-S-adenosyl-L-methionine synthase (237 aa).

S-adenosyl-L-methionine-binding positions include Tyr-40, 65 to 67, 116 to 117, Asn-131, and Arg-194; these read GCS and DI.

Belongs to the class I-like SAM-binding methyltransferase superfamily. Cx-SAM synthase family. As to quaternary structure, homodimer.

The catalysed reaction is prephenate + S-adenosyl-L-methionine = carboxy-S-adenosyl-L-methionine + 3-phenylpyruvate + H2O. In terms of biological role, catalyzes the conversion of S-adenosyl-L-methionine (SAM) to carboxy-S-adenosyl-L-methionine (Cx-SAM). This chain is Carboxy-S-adenosyl-L-methionine synthase, found in Dichelobacter nodosus (strain VCS1703A).